Reading from the N-terminus, the 317-residue chain is Pyridoxal 5'-phosphate synthase subunit PdxS (317 aa).

D-ribose 5-phosphate is bound at residue aspartate 47. Catalysis depends on lysine 104, which acts as the Schiff-base intermediate with D-ribose 5-phosphate. Glycine 176 is a binding site for D-ribose 5-phosphate. Residue arginine 188 participates in D-glyceraldehyde 3-phosphate binding. D-ribose 5-phosphate is bound by residues glycine 237 and 258 to 259 (GS).

This sequence belongs to the PdxS/SNZ family. In terms of assembly, in the presence of PdxT, forms a dodecamer of heterodimers.

The enzyme catalyses aldehydo-D-ribose 5-phosphate + D-glyceraldehyde 3-phosphate + L-glutamine = pyridoxal 5'-phosphate + L-glutamate + phosphate + 3 H2O + H(+). It functions in the pathway cofactor biosynthesis; pyridoxal 5'-phosphate biosynthesis. Functionally, catalyzes the formation of pyridoxal 5'-phosphate from ribose 5-phosphate (RBP), glyceraldehyde 3-phosphate (G3P) and ammonia. The ammonia is provided by the PdxT subunit. Can also use ribulose 5-phosphate and dihydroxyacetone phosphate as substrates, resulting from enzyme-catalyzed isomerization of RBP and G3P, respectively. The sequence is that of Pyridoxal 5'-phosphate synthase subunit PdxS from Corynebacterium glutamicum (strain ATCC 13032 / DSM 20300 / JCM 1318 / BCRC 11384 / CCUG 27702 / LMG 3730 / NBRC 12168 / NCIMB 10025 / NRRL B-2784 / 534).